A 567-amino-acid polypeptide reads, in one-letter code: Thiol:disulfide interchange protein DsbD (567 aa).

An N-terminal signal peptide occupies residues 1–19 (MAQRIFTLILLLCSTSAFA). Intrachain disulfides connect cysteine 122-cysteine 128 and cysteine 185-cysteine 307. 7 consecutive transmembrane segments (helical) span residues 170–192 (ALWA…MYPL), 212–234 (LAFI…VAAA), 246–268 (YVLI…LFTL), 297–319 (GAIA…LLYI), 326–348 (WLGG…LVTV), 358–380 (GPWM…VFLL), and 387–409 (AWGL…ITSL). Residues 435 to 567 (QDWAFGSPSA…FSAHLHDRQP (133 aa)) form the Thioredoxin domain. Cysteine 482 and cysteine 485 form a disulfide bridge.

It belongs to the thioredoxin family. DsbD subfamily.

The protein localises to the cell inner membrane. It carries out the reaction [protein]-dithiol + NAD(+) = [protein]-disulfide + NADH + H(+). It catalyses the reaction [protein]-dithiol + NADP(+) = [protein]-disulfide + NADPH + H(+). In terms of biological role, required to facilitate the formation of correct disulfide bonds in some periplasmic proteins and for the assembly of the periplasmic c-type cytochromes. Acts by transferring electrons from cytoplasmic thioredoxin to the periplasm. This transfer involves a cascade of disulfide bond formation and reduction steps. The polypeptide is Thiol:disulfide interchange protein DsbD (Salmonella typhimurium (strain LT2 / SGSC1412 / ATCC 700720)).